Here is a 501-residue protein sequence, read N- to C-terminus: Sucrose transport protein SUT2 (501 aa).

The Cytoplasmic segment spans residues Met1–Ala31. Residues Ser32 to Val52 traverse the membrane as a helical segment. At Gln53–Leu55 the chain is on the extracellular side. A helical membrane pass occupies residues Gly56–Val76. Residues Gln77–Arg98 lie on the Cytoplasmic side of the membrane. A helical transmembrane segment spans residues Pro99–Ala119. At Asp120 to Arg135 the chain is on the extracellular side. The chain crosses the membrane as a helical span at residues Leu136–Thr156. Residues Gln157 to Arg176 lie on the Cytoplasmic side of the membrane. A helical membrane pass occupies residues Ile177–Gly197. Residues Ala198 to Lys222 are Extracellular-facing. A helical membrane pass occupies residues Ser223 to Val243. The Cytoplasmic portion of the chain corresponds to Gln244–Pro278. A helical membrane pass occupies residues Val279–Phe299. Over Asp300 to Arg327 the chain is Extracellular. Residues Met328 to Glu348 form a helical membrane-spanning segment. Topologically, residues Lys349–Ala356 are cytoplasmic. A helical membrane pass occupies residues Gly357 to Ile377. Residues Thr378–Thr394 are Extracellular-facing. Residues Gly395–Tyr415 traverse the membrane as a helical segment. The Cytoplasmic segment spans residues Ser416–Gln433. A helical transmembrane segment spans residues Gly434–Gly454. Residues Ser455 to Ala467 are Extracellular-facing. The chain crosses the membrane as a helical span at residues Pro468 to Leu488. Over Pro489–Arg501 the chain is Cytoplasmic.

It belongs to the glycoside-pentoside-hexuronide (GPH) cation symporter transporter (TC 2.A.2.4) family. Homodimer. As to expression, expressed in source leaf blades.

Its subcellular location is the cell membrane. The protein operates within glycan biosynthesis; sucrose metabolism. In terms of biological role, responsible for the transport of sucrose into the cell, with the concomitant uptake of protons (symport system). May also transport other glucosides. The chain is Sucrose transport protein SUT2 (SUT2) from Oryza sativa subsp. indica (Rice).